We begin with the raw amino-acid sequence, 236 residues long: Zinc finger AN1 domain-containing stress-associated protein 13 (236 aa).

Disordered stretches follow at residues 48–81 (KEGR…PGKR) and 150–173 (TVPE…AKTK). Residues 66–75 (RLQLPTTSIV) are compositionally biased toward polar residues. Residues 170–216 (AKTKSRCAACGRRVGLMGFECRCGAVFCGAHPLLGQARLWLRLQGRA) form an AN1-type; degenerate zinc finger. Residues cysteine 176, cysteine 179, cysteine 197, and histidine 200 each contribute to the Zn(2+) site.

In terms of biological role, may be involved in environmental stress response. This Oryza sativa subsp. japonica (Rice) protein is Zinc finger AN1 domain-containing stress-associated protein 13 (SAP13).